Consider the following 361-residue polypeptide: Cobalt-precorrin-5B C(1)-methyltransferase (361 aa).

This sequence belongs to the CbiD family.

The enzyme catalyses Co-precorrin-5B + S-adenosyl-L-methionine = Co-precorrin-6A + S-adenosyl-L-homocysteine. The protein operates within cofactor biosynthesis; adenosylcobalamin biosynthesis; cob(II)yrinate a,c-diamide from sirohydrochlorin (anaerobic route): step 6/10. Catalyzes the methylation of C-1 in cobalt-precorrin-5B to form cobalt-precorrin-6A. The sequence is that of Cobalt-precorrin-5B C(1)-methyltransferase from Methanobrevibacter smithii (strain ATCC 35061 / DSM 861 / OCM 144 / PS).